The sequence spans 1001 residues: Receptor-type tyrosine-protein phosphatase N2 (1001 aa).

The first 27 residues, M1–A27, serve as a signal peptide directing secretion. The tract at residues M1–S407 is involved in localization to secretory granules; interaction with CPE. Topologically, residues R28 to K600 are extracellular. R259 carries the omega-N-methylarginine modification. 3 disordered regions span residues P271 to D296, Q308 to E359, and S394 to Q459. Basic and acidic residues predominate over residues E312–D325. S339 is subject to Phosphoserine. Over residues Q340 to T355 the composition is skewed to basic and acidic residues. Over residues S394–E404 the composition is skewed to low complexity. Positions K405–Q416 are enriched in basic and acidic residues. Residues P417 to A428 are compositionally biased toward acidic residues. A phosphoserine mark is found at S422 and S423. Basic and acidic residues predominate over residues G429–Q459. N-linked (GlcNAc...) asparagine glycosylation is present at N550. The chain crosses the membrane as a helical span at residues F601–L621. Over A622–Q1001 the chain is Cytoplasmic. Positions Y652–A661 match the Tyrosine-based internalization motif motif. The disordered stretch occupies residues R663–V705. The span at S674–S684 shows a compositional bias: polar residues. Phosphoserine is present on residues S678 and S684. Residues P691 to V705 are compositionally biased toward low complexity. T697 carries the post-translational modification Phosphothreonine. Residues L731–E991 form the Tyrosine-protein phosphatase domain. Substrate is bound by residues D899 and C931–R937. The Phosphocysteine intermediate role is filled by C931. N6-acetyllysine is present on K956. A substrate-binding site is contributed by Q976. The Leucine-based sorting signal signature appears at E990–L996.

The protein belongs to the protein-tyrosine phosphatase family. As to quaternary structure, self-associates. Interacts (via cytoplasmic domain) with PTPRN (via cytoplasmic domain). Interacts (precursor form) with CPE. Interacts with HAP1 isoform A. Interacts with AP2A1 or AP2A2 and AP1G1; indicative for an association with adaptor protein complex 2 (AP-2) and adaptor protein complex 1 (AP-1). Interacts with AP2M1; indicative for an association with adaptor protein complex 2 (AP-2). Interacts with MYO5A. Subject to proteolytic cleavage at multiple sites during maturation of secretory granules. In the brain at least IA-2beta71, IA-2beta64 and IA-2beta60 have been detected, in the pancreas and a pancreatic beta cell line only IA-2beta60 has been detected. As to expression, detected in brain. Detected in pancreas islets (at protein level). Detected in pancreas and brain.

It localises to the cytoplasmic vesicle. The protein resides in the secretory vesicle membrane. It is found in the secretory vesicle. The protein localises to the synaptic vesicle membrane. The enzyme catalyses O-phospho-L-tyrosyl-[protein] + H2O = L-tyrosyl-[protein] + phosphate. Functionally, plays a role in vesicle-mediated secretory processes. Required for normal accumulation of secretory vesicles in hippocampus, pituitary and pancreatic islets. Required for the accumulation of normal levels of insulin-containing vesicles and preventing their degradation. Plays a role in insulin secretion in response to glucose stimuli. Required for normal accumulation of the neurotransmitters norepinephrine, dopamine and serotonin in the brain. In females, but not in males, required for normal accumulation and secretion of pituitary hormones, such as luteinizing hormone (LH) and follicle-stimulating hormone (FSH). Required to maintain normal levels of renin expression and renin release. May regulate catalytic active protein-tyrosine phosphatases such as PTPRA through dimerization. Has phosphatidylinositol phosphatase activity; the PIPase activity is involved in its ability to regulate insulin secretion. Can dephosphorylate phosphatidylinositol 4,5-biphosphate (PI(4,5)P2), phosphatidylinositol 5-phosphate and phosphatidylinositol 3-phosphate. Regulates PI(4,5)P2 level in the plasma membrane and localization of cofilin at the plasma membrane and thus is indirectly involved in regulation of actin dynamics related to cell migration and metastasis; upon hydrolysis of PI(4,5)P2 cofilin is released from the plasma membrane and acts in the cytoplasm in severing F-actin filaments. This Mus musculus (Mouse) protein is Receptor-type tyrosine-protein phosphatase N2 (Ptprn2).